Reading from the N-terminus, the 307-residue chain is N-acetylmuramic acid 6-phosphate etherase (307 aa).

Residues 62–225 (IVAAFQKGGR…TTASMIRIGK (164 aa)) form the SIS domain. Glu90 serves as the catalytic Proton donor. Glu121 is a catalytic residue.

This sequence belongs to the GCKR-like family. MurNAc-6-P etherase subfamily. As to quaternary structure, homodimer.

The enzyme catalyses N-acetyl-D-muramate 6-phosphate + H2O = N-acetyl-D-glucosamine 6-phosphate + (R)-lactate. The protein operates within amino-sugar metabolism; 1,6-anhydro-N-acetylmuramate degradation. Its pathway is amino-sugar metabolism; N-acetylmuramate degradation. It participates in cell wall biogenesis; peptidoglycan recycling. Specifically catalyzes the cleavage of the D-lactyl ether substituent of MurNAc 6-phosphate, producing GlcNAc 6-phosphate and D-lactate. Together with AnmK, is also required for the utilization of anhydro-N-acetylmuramic acid (anhMurNAc) either imported from the medium or derived from its own cell wall murein, and thus plays a role in cell wall recycling. This is N-acetylmuramic acid 6-phosphate etherase from Rhizobium rhizogenes (strain K84 / ATCC BAA-868) (Agrobacterium radiobacter).